A 742-amino-acid chain; its full sequence is Envelope glycoprotein H (742 aa).

The N-terminal stretch at 1 to 29 (MRPGLPSYLIVLAVCLLSHLLSSRYGAEA) is a signal peptide. The Virion surface segment spans residues 30-719 (ISEPLDKAFH…VVDATDSRLL (690 aa)). N-linked (GlcNAc...) asparagine; by host glycosylation is found at N55, N62, N67, and N192. Residues 217 to 280 (YLIDELRYVK…QTEKHELLVL (64 aa)) form an interaction with gL region. Residues N641 and N700 are each glycosylated (N-linked (GlcNAc...) asparagine; by host). A helical membrane pass occupies residues 720–740 (MMSVYALSAIIGIYLLYRMLK). Topologically, residues 741–742 (TC) are intravirion.

This sequence belongs to the herpesviridae glycoprotein H family. Interacts with glycoprotein L (gL); this interaction is necessary for the correct processing and cell surface expression of gH. The heterodimer gH/gL seems to interact with gB trimers during fusion. Forms the envelope pentamer complex (PC) composed of gH, gL, UL128, UL130, and UL131A. The pentamer interacts with host NRP2. Forms the envelope trimer complex composed of gH, gL, and gO. The trimer interacts with host PDGFRA. The trimer also interacts with host EPHA2. Post-translationally, N-glycosylated, O-glycosylated, and sialylated.

The protein localises to the virion membrane. Its subcellular location is the host cell membrane. The protein resides in the host endosome membrane. Its function is as follows. The heterodimer glycoprotein H-glycoprotein L is required for the fusion of viral and plasma membranes leading to virus entry into the host cell. Following initial binding to host receptor, membrane fusion is mediated by the fusion machinery composed of gB and the heterodimer gH/gL. May also be involved in the fusion between the virion envelope and the outer nuclear membrane during virion morphogenesis. In human cytomegalovirus, forms two distincts complexes to mediate viral entry, a trimer and a pentamer at the surface of the virion envelope. The gH-gL-gO trimer is required for infection in fibroblasts by interacting with host PDGFRA, and in glioblastoma cells by interacting with host EPHA2. The gH-gL-UL128-UL130-UL131A pentamer is essential for viral entry in epithelial, endothelial and myeloid cells via interaction with host NRP2. This is Envelope glycoprotein H from Human cytomegalovirus (strain Towne) (HHV-5).